A 101-amino-acid polypeptide reads, in one-letter code: Ubiquitin-related modifier 1 (101 aa).

1-thioglycine is present on Gly101. Gly101 is covalently cross-linked (Glycyl lysine isopeptide (Gly-Lys) (interchain with K-? in acceptor proteins)).

The protein belongs to the URM1 family. C-terminal thiocarboxylation occurs in 2 steps, it is first acyl-adenylated (-COAMP) via the hesA/moeB/thiF part of UBA4, then thiocarboxylated (-COSH) via the rhodanese domain of UBA4.

It is found in the cytoplasm. Its pathway is tRNA modification; 5-methoxycarbonylmethyl-2-thiouridine-tRNA biosynthesis. In terms of biological role, acts as a sulfur carrier required for 2-thiolation of mcm(5)S(2)U at tRNA wobble positions of cytosolic tRNA(Lys), tRNA(Glu) and tRNA(Gln). Serves as sulfur donor in tRNA 2-thiolation reaction by being thiocarboxylated (-COSH) at its C-terminus by the MOCS3 homolog UBA4. The sulfur is then transferred to tRNA to form 2-thiolation of mcm(5)S(2)U. Prior mcm(5) tRNA modification by the elongator complex is required for 2-thiolation. Also acts as a ubiquitin-like protein (UBL) that is covalently conjugated via an isopeptide bond to lysine residues of target proteins such as AHP1. The thiocarboxylated form serves as substrate for conjugation and oxidative stress specifically induces the formation of UBL-protein conjugates. This is Ubiquitin-related modifier 1 from Candida albicans (strain SC5314 / ATCC MYA-2876) (Yeast).